The primary structure comprises 219 residues: tRNA (guanine-N(7)-)-methyltransferase (219 aa).

The S-adenosyl-L-methionine site is built by E46, E71, D100, and D122. Residue D122 is part of the active site. Position 126 (K126) interacts with substrate. An interaction with RNA region spans residues 128 to 133; sequence KHEKRR. Substrate is bound by residues D158 and 199-202; that span reads TEYE.

This sequence belongs to the class I-like SAM-binding methyltransferase superfamily. TrmB family.

The catalysed reaction is guanosine(46) in tRNA + S-adenosyl-L-methionine = N(7)-methylguanosine(46) in tRNA + S-adenosyl-L-homocysteine. It functions in the pathway tRNA modification; N(7)-methylguanine-tRNA biosynthesis. In terms of biological role, catalyzes the formation of N(7)-methylguanine at position 46 (m7G46) in tRNA. The chain is tRNA (guanine-N(7)-)-methyltransferase from Oenococcus oeni (strain ATCC BAA-331 / PSU-1).